A 192-amino-acid chain; its full sequence is uncharacterized protein (192 aa).

The N-terminal stretch at 1–17 (MFLHLILLAGLAPVVYL) is a signal peptide.

This is an uncharacterized protein from Caenorhabditis elegans.